Reading from the N-terminus, the 78-residue chain is Calcium/calmodulin-dependent protein kinase II inhibitor 1 (78 aa).

The interval 41–68 (NKRPPKLGQIGRSKRVVIEDDRIDDVLK) is CAMK2 inhibitory domain.

It belongs to the CAMK2N family. As to quaternary structure, interacts with CAMK2B; the presence of Ca(2+)/calmodulin increases the interaction but is not essential. Interacts with CAMK2A; this interaction requires CAMK2A activation by Ca(2+).

It is found in the synapse. It localises to the cell projection. The protein resides in the dendrite. Its subcellular location is the postsynaptic density. Its function is as follows. Potent and specific inhibitor of CaM-kinase II (CAMK2). Plays a role in the maintenance of long-term retrieval-induced memory in response to contextual fear. Modulates blood pressure and vascular reactivity via regulation of CAMK2 activity in addition to regulation of left ventricular mass. Mediates the NLRP3 inflammasome in cardiomyocytes via acting as an inhibitor of the MAPK14/p38 and MAPK8/JNK pathways, thereby regulating ventricular remodeling and cardiac rhythm post-myocardial infarction. Negatively effects insulin sensitivity and promotes lipid formation in adipose tissues independent of CAMK2 signaling. The protein is Calcium/calmodulin-dependent protein kinase II inhibitor 1 (CAMK2N1) of Bos taurus (Bovine).